The primary structure comprises 62 residues: Photosystem II reaction center protein Z (62 aa).

Helical transmembrane passes span 8–28 and 41–61; these read AVFALIATSSILLISVPVVFA and FSGTSLWITLVFLVGILNSLI.

This sequence belongs to the PsbZ family. In terms of assembly, PSII is composed of 1 copy each of membrane proteins PsbA, PsbB, PsbC, PsbD, PsbE, PsbF, PsbH, PsbI, PsbJ, PsbK, PsbL, PsbM, PsbT, PsbY, PsbZ, Psb30/Ycf12, at least 3 peripheral proteins of the oxygen-evolving complex and a large number of cofactors. It forms dimeric complexes.

Its subcellular location is the plastid. It localises to the chloroplast thylakoid membrane. In terms of biological role, may control the interaction of photosystem II (PSII) cores with the light-harvesting antenna, regulates electron flow through the 2 photosystem reaction centers. PSII is a light-driven water plastoquinone oxidoreductase, using light energy to abstract electrons from H(2)O, generating a proton gradient subsequently used for ATP formation. This Morus indica (Mulberry) protein is Photosystem II reaction center protein Z.